We begin with the raw amino-acid sequence, 592 residues long: Delta-like protein 3 (592 aa).

An N-terminal signal peptide occupies residues 1–32; the sequence is MVSLQVSPLSQTLILAFLLPQALPAGVFELQI. The Extracellular segment spans residues 33-490; it reads HSFGPGPGLG…LRQADPQRFL (458 aa). Residues 174–213 enclose the DSL domain; the sequence is ARCEPPAVGAACARLCRSRSAPSRCGPGLRPCTPFPDECE. EGF-like domains are found at residues 214 to 247, 272 to 308, 310 to 349, 351 to 387, 389 to 425, and 427 to 463; these read APSV…PLCT, GPGP…LRCE, SGVT…SNCE, RVDR…PRCE, DLDD…RDCR, and RADP…VRCE. 18 disulfide bridges follow: C218/C229, C222/C235, C237/C246, C276/C287, C281/C296, C298/C307, C314/C325, C319/C337, C339/C348, C355/C366, C360/C375, C377/C386, C393/C404, C398/C413, C415/C424, C431/C442, C436/C451, and C453/C462. A helical membrane pass occupies residues 491–511; it reads LPPALGLLVAAGLAGAALLVI. Residues 512–592 are Cytoplasmic-facing; that stretch reads HVRRRGPGQD…REDWLIQVLF (81 aa). Positions 548–567 are disordered; the sequence is QDGAGDGPSSSADWNHPEDG.

In terms of assembly, can bind and activate Notch-1 or another Notch receptor. Ubiquitinated by MIB (MIB1 or MIB2), leading to its endocytosis and subsequent degradation. In terms of tissue distribution, predominantly expressed in the neuroectoderm and paraxial mesoderm during embryogenesis.

The protein resides in the membrane. Inhibits primary neurogenesis. May be required to divert neurons along a specific differentiation pathway. Plays a role in the formation of somite boundaries during segmentation of the paraxial mesoderm. The chain is Delta-like protein 3 (Dll3) from Mus musculus (Mouse).